We begin with the raw amino-acid sequence, 623 residues long: Transketolase (623 aa).

Position 1 is an N-acetylmethionine (Met-1). Lys-6 and Lys-11 each carry N6-acetyllysine. His-37 serves as a coordination point for substrate. Ser-40 and His-77 together coordinate thiamine diphosphate. Ser-104 carries the phosphoserine modification. 123-125 (GSL) provides a ligand contact to thiamine diphosphate. Lys-144 carries the N6-acetyllysine modification. Asp-155 is a binding site for Mg(2+). Thiamine diphosphate-binding residues include Gly-156 and Asn-185. Mg(2+)-binding residues include Asn-185 and Leu-187. N6-acetyllysine occurs at positions 204, 232, and 241. Thiamine diphosphate contacts are provided by Lys-244 and His-258. Position 258 (His-258) interacts with substrate. Position 260 is an N6-acetyllysine (Lys-260). Tyr-275 bears the Phosphotyrosine mark. The residue at position 287 (Thr-287) is a Phosphothreonine. Ser-295 bears the Phosphoserine mark. Arg-318 is a binding site for substrate. Lys-352 participates in a covalent cross-link: Glycyl lysine isopeptide (Lys-Gly) (interchain with G-Cter in SUMO2). Glu-366 functions as the Proton donor in the catalytic mechanism. Thiamine diphosphate is bound at residue Phe-392. Residues His-416 and Asp-424 each contribute to the substrate site. Gln-428 lines the thiamine diphosphate pocket. Position 474 (Arg-474) interacts with substrate. An N6-acetyllysine mark is found at Lys-538 and Lys-603.

Belongs to the transketolase family. As to quaternary structure, homodimer. The cofactor is Mg(2+). Ca(2+) serves as cofactor. It depends on Mn(2+) as a cofactor. Requires Co(2+) as cofactor. Thiamine diphosphate is required as a cofactor.

It catalyses the reaction D-sedoheptulose 7-phosphate + D-glyceraldehyde 3-phosphate = aldehydo-D-ribose 5-phosphate + D-xylulose 5-phosphate. Catalyzes the transfer of a two-carbon ketol group from a ketose donor to an aldose acceptor, via a covalent intermediate with the cofactor thiamine pyrophosphate. The sequence is that of Transketolase (TKT) from Pongo abelii (Sumatran orangutan).